The following is a 246-amino-acid chain: Transcription factor A, mitochondrial (246 aa).

The transit peptide at 1-42 (MALLRGVWGVLSALGKSGADLCAVCGSRLRSPFSFAYVPRWF) directs the protein to the mitochondrion. Positions 50–118 (PKKPMTSYVR…VYKEEVNRIQ (69 aa)) form a DNA-binding region, HMG box 1. Phosphoserine; by PKA is present on residues Ser56 and Ser61. The residue at position 122 (Thr122) is a Phosphothreonine. Positions 155–219 (PKRPRSAYNI…RYYNEMKSWE (65 aa)) form a DNA-binding region, HMG box 2. Ser160 is subject to Phosphoserine; by PKA. Ser193 and Ser195 each carry phosphoserine.

Monomer; binds DNA as a monomer. Homodimer. Component of the mitochondrial transcription initiation complex, composed at least of TFB2M, TFAM and POLRMT. In this complex TFAM recruits POLRMT to the promoter whereas TFB2M induces structural changes in POLRMT to enable promoter opening and trapping of the DNA non-template strand. Upon metabolic stress, forms a complex composed of FOXO3, SIRT3, TFAM and POLRMT. Interacts with TFB1M and TFB2M. Interacts with CLPX; this enhances DNA-binding. Post-translationally, phosphorylation by PKA within the HMG box 1 impairs DNA binding and promotes degradation by the AAA+ Lon protease.

Its subcellular location is the mitochondrion. It localises to the mitochondrion matrix. The protein resides in the mitochondrion nucleoid. Functionally, binds to the mitochondrial light strand promoter and functions in mitochondrial transcription regulation. Component of the mitochondrial transcription initiation complex, composed at least of TFB2M, TFAM and POLRMT that is required for basal transcription of mitochondrial DNA. In this complex, TFAM recruits POLRMT to a specific promoter whereas TFB2M induces structural changes in POLRMT to enable promoter opening and trapping of the DNA non-template strand. Required for accurate and efficient promoter recognition by the mitochondrial RNA polymerase. Promotes transcription initiation from the HSP1 and the light strand promoter by binding immediately upstream of transcriptional start sites. Is able to unwind DNA. Bends the mitochondrial light strand promoter DNA into a U-turn shape via its HMG boxes. Required for maintenance of normal levels of mitochondrial DNA. May play a role in organizing and compacting mitochondrial DNA. This chain is Transcription factor A, mitochondrial, found in Sus scrofa (Pig).